The following is a 753-amino-acid chain: 5-methyltetrahydropteroyltriglutamate--homocysteine methyltransferase (753 aa).

5-methyltetrahydropteroyltri-L-glutamate is bound by residues 17 to 20 (RELK) and K117. L-homocysteine-binding positions include 431–433 (IGS) and E484. Residues 431–433 (IGS) and E484 contribute to the L-methionine site. 5-methyltetrahydropteroyltri-L-glutamate contacts are provided by residues 515–516 (RC) and W561. D599 is a binding site for L-homocysteine. D599 contributes to the L-methionine binding site. E605 provides a ligand contact to 5-methyltetrahydropteroyltri-L-glutamate. Residues H641, C643, and E665 each contribute to the Zn(2+) site. The active-site Proton donor is the H694. C726 is a Zn(2+) binding site.

Belongs to the vitamin-B12 independent methionine synthase family. Zn(2+) serves as cofactor.

The catalysed reaction is 5-methyltetrahydropteroyltri-L-glutamate + L-homocysteine = tetrahydropteroyltri-L-glutamate + L-methionine. Its pathway is amino-acid biosynthesis; L-methionine biosynthesis via de novo pathway; L-methionine from L-homocysteine (MetE route): step 1/1. In terms of biological role, catalyzes the transfer of a methyl group from 5-methyltetrahydrofolate to homocysteine resulting in methionine formation. The polypeptide is 5-methyltetrahydropteroyltriglutamate--homocysteine methyltransferase (Klebsiella pneumoniae (strain 342)).